The primary structure comprises 1487 residues: Chromosome partition protein MukB (1487 aa).

34–41 (GGNGAGKS) contacts ATP. Coiled coils occupy residues 297-426 (SSRE…LEKA), 460-666 (ALKH…RLAS), 781-806 (RAAR…AKAA), 836-1111 (EQAL…RTFV), and 1210-1266 (VEAI…LSNI). Residues 667-784 (PGGSNDPRLK…VIPLFGRAAR (118 aa)) form a flexible hinge region.

Belongs to the SMC family. MukB subfamily. In terms of assembly, homodimerization via its hinge domain. Binds to DNA via its C-terminal region. Interacts, and probably forms a ternary complex, with MukE and MukF via its C-terminal region. The complex formation is stimulated by calcium or magnesium. Interacts with tubulin-related protein FtsZ.

It is found in the cytoplasm. Its subcellular location is the nucleoid. Functionally, plays a central role in chromosome condensation, segregation and cell cycle progression. Functions as a homodimer, which is essential for chromosome partition. Involved in negative DNA supercoiling in vivo, and by this means organize and compact chromosomes. May achieve or facilitate chromosome segregation by condensation DNA from both sides of a centrally located replisome during cell division. The protein is Chromosome partition protein MukB of Vibrio vulnificus (strain CMCP6).